The primary structure comprises 375 residues: tRNA-specific 2-thiouridylase MnmA (375 aa).

Residues 12–19 (GMSGGVDS) and Met38 contribute to the ATP site. The interval 98-100 (NPD) is interaction with target base in tRNA. The active-site Nucleophile is Cys103. A disulfide bridge links Cys103 with Cys200. Gly127 contacts ATP. Positions 150–152 (KDQ) are interaction with tRNA. The active-site Cysteine persulfide intermediate is the Cys200. The tract at residues 312-313 (RY) is interaction with tRNA.

Belongs to the MnmA/TRMU family.

Its subcellular location is the cytoplasm. The catalysed reaction is S-sulfanyl-L-cysteinyl-[protein] + uridine(34) in tRNA + AH2 + ATP = 2-thiouridine(34) in tRNA + L-cysteinyl-[protein] + A + AMP + diphosphate + H(+). Functionally, catalyzes the 2-thiolation of uridine at the wobble position (U34) of tRNA, leading to the formation of s(2)U34. The polypeptide is tRNA-specific 2-thiouridylase MnmA (Levilactobacillus brevis (strain ATCC 367 / BCRC 12310 / CIP 105137 / JCM 1170 / LMG 11437 / NCIMB 947 / NCTC 947) (Lactobacillus brevis)).